A 78-amino-acid polypeptide reads, in one-letter code: Large ribosomal subunit protein bL28 (78 aa).

The protein belongs to the bacterial ribosomal protein bL28 family.

In Pectobacterium atrosepticum (strain SCRI 1043 / ATCC BAA-672) (Erwinia carotovora subsp. atroseptica), this protein is Large ribosomal subunit protein bL28.